We begin with the raw amino-acid sequence, 297 residues long: Cytidine deaminase (297 aa).

CMP/dCMP-type deaminase domains are found at residues 50–170 (SDKE…FGPK) and 189–297 (ETES…YASL). 91-93 (NME) is a substrate binding site. His-104 lines the Zn(2+) pocket. Glu-106 functions as the Proton donor in the catalytic mechanism. Residues Cys-131 and Cys-134 each contribute to the Zn(2+) site.

The protein belongs to the cytidine and deoxycytidylate deaminase family. Homodimer. It depends on Zn(2+) as a cofactor.

It catalyses the reaction cytidine + H2O + H(+) = uridine + NH4(+). It carries out the reaction 2'-deoxycytidine + H2O + H(+) = 2'-deoxyuridine + NH4(+). Its function is as follows. This enzyme scavenges exogenous and endogenous cytidine and 2'-deoxycytidine for UMP synthesis. The protein is Cytidine deaminase of Aliivibrio fischeri (strain ATCC 700601 / ES114) (Vibrio fischeri).